The sequence spans 163 residues: Cyclic pyranopterin monophosphate synthase (163 aa).

Residues 75 to 77 and 115 to 116 each bind substrate; these read MCH and ME. Asp130 is a catalytic residue.

This sequence belongs to the MoaC family. In terms of assembly, homohexamer; trimer of dimers.

The enzyme catalyses (8S)-3',8-cyclo-7,8-dihydroguanosine 5'-triphosphate = cyclic pyranopterin phosphate + diphosphate. It functions in the pathway cofactor biosynthesis; molybdopterin biosynthesis. In terms of biological role, catalyzes the conversion of (8S)-3',8-cyclo-7,8-dihydroguanosine 5'-triphosphate to cyclic pyranopterin monophosphate (cPMP). The chain is Cyclic pyranopterin monophosphate synthase from Bacillus pumilus (strain SAFR-032).